Consider the following 272-residue polypeptide: Putative phosphoenolpyruvate synthase regulatory protein (272 aa).

Position 152-159 (152-159 (GVSRCGKT)) interacts with ADP.

It belongs to the pyruvate, phosphate/water dikinase regulatory protein family. PSRP subfamily.

The enzyme catalyses [pyruvate, water dikinase] + ADP = [pyruvate, water dikinase]-phosphate + AMP + H(+). It carries out the reaction [pyruvate, water dikinase]-phosphate + phosphate + H(+) = [pyruvate, water dikinase] + diphosphate. Bifunctional serine/threonine kinase and phosphorylase involved in the regulation of the phosphoenolpyruvate synthase (PEPS) by catalyzing its phosphorylation/dephosphorylation. This Pseudomonas putida (strain ATCC 700007 / DSM 6899 / JCM 31910 / BCRC 17059 / LMG 24140 / F1) protein is Putative phosphoenolpyruvate synthase regulatory protein.